The sequence spans 814 residues: Protein kinase C-binding protein NELL2 (814 aa).

A signal peptide spans 1-19 (MEFILGIFCVLFCLRAGAG). Asparagine 51, asparagine 223, and asparagine 296 each carry an N-linked (GlcNAc...) asparagine glycan. The 174-residue stretch at 53–226 (SKAFLFQDTS…SQCPDLNRTC (174 aa)) folds into the Laminin G-like domain. The 60-residue stretch at 270-329 (RSCTVKGNIYRELESWMDGCKKCTCTNGTAQCETLTCSAPNCLSGFSPAYVPGKCCKECQ) folds into the VWFC 1 domain. In terms of domain architecture, EGF-like 1 spans 395–437 (GHDFCSEGHNCMGYSICKNLDDKAVCICRDGFRALREDNAYCE). 3 disulfides stabilise this stretch: cysteine 399-cysteine 411, cysteine 405-cysteine 420, and cysteine 422-cysteine 436. Positions 438, 439, and 441 each coordinate Ca(2+). One can recognise an EGF-like 2; calcium-binding domain in the interval 438–479 (DIDECTEGRHYCRENTVCVNTPGSFMCVCQTGYLKIDDYSCT). 9 cysteine pairs are disulfide-bonded: cysteine 442-cysteine 455, cysteine 449-cysteine 464, cysteine 466-cysteine 478, cysteine 484-cysteine 497, cysteine 491-cysteine 506, cysteine 508-cysteine 519, cysteine 523-cysteine 533, cysteine 527-cysteine 539, and cysteine 541-cysteine 550. Positions 457, 458, and 461 each coordinate Ca(2+). In terms of domain architecture, EGF-like 3; calcium-binding spans 480–520 (EHNECATNQHSCDENAMCFNTVGGHNCVCQPGYTGNGTDCR). Asparagine 515 is a glycosylation site (N-linked (GlcNAc...) asparagine). The EGF-like 4 domain maps to 521-551 (AFCKDGCRNGGTCIAPNICACPQGFTGPSCE). Ca(2+) is bound by residues aspartate 553, isoleucine 554, and glutamate 556. Positions 553-599 (DIDECTEGFVQCDSRANCINLPGWYHCECRDGYHDNGMFSLGGESCE) constitute an EGF-like 5; calcium-binding domain. Intrachain disulfides connect cysteine 557-cysteine 570, cysteine 564-cysteine 579, and cysteine 581-cysteine 598. The Ca(2+) site is built by asparagine 572, leucine 573, and tryptophan 576. Ca(2+) is bound by residues aspartate 600, isoleucine 601, and glutamate 603. Positions 600–635 (DIDECATGRHSCSNDTVCFNLDGGFDCRCPHGKNCS) constitute an EGF-like 6; calcium-binding domain. Cystine bridges form between cysteine 604/cysteine 617, cysteine 611/cysteine 626, and cysteine 628/cysteine 634. A glycan (N-linked (GlcNAc...) asparagine) is linked at asparagine 613. 3 residues coordinate Ca(2+): asparagine 619, leucine 620, and glycine 623. N-linked (GlcNAc...) asparagine glycosylation occurs at asparagine 633. VWFC domains lie at 636-691 (GDCT…PECD) and 696-754 (SQCL…PRCV).

Homotrimer.

The protein resides in the secreted. Its function is as follows. May regulate neuronal differentiation, polarization and axon guidance. The sequence is that of Protein kinase C-binding protein NELL2 (nell2.L) from Xenopus laevis (African clawed frog).